Consider the following 429-residue polypeptide: 3-phosphoshikimate 1-carboxyvinyltransferase (429 aa).

Positions 22, 23, and 27 each coordinate 3-phosphoshikimate. Lysine 22 contributes to the phosphoenolpyruvate binding site. Phosphoenolpyruvate-binding residues include glycine 94 and arginine 122. Residues serine 167, glutamine 169, aspartate 315, and lysine 342 each contribute to the 3-phosphoshikimate site. Residue glutamine 169 participates in phosphoenolpyruvate binding. Aspartate 315 (proton acceptor) is an active-site residue. Arginine 346 and arginine 388 together coordinate phosphoenolpyruvate.

This sequence belongs to the EPSP synthase family. As to quaternary structure, monomer.

Its subcellular location is the cytoplasm. It carries out the reaction 3-phosphoshikimate + phosphoenolpyruvate = 5-O-(1-carboxyvinyl)-3-phosphoshikimate + phosphate. It functions in the pathway metabolic intermediate biosynthesis; chorismate biosynthesis; chorismate from D-erythrose 4-phosphate and phosphoenolpyruvate: step 6/7. Functionally, catalyzes the transfer of the enolpyruvyl moiety of phosphoenolpyruvate (PEP) to the 5-hydroxyl of shikimate-3-phosphate (S3P) to produce enolpyruvyl shikimate-3-phosphate and inorganic phosphate. The protein is 3-phosphoshikimate 1-carboxyvinyltransferase of Geobacter metallireducens (strain ATCC 53774 / DSM 7210 / GS-15).